Here is a 181-residue protein sequence, read N- to C-terminus: Dual-action ribosomal maturation protein DarP (181 aa).

Belongs to the DarP family.

The protein localises to the cytoplasm. Member of a network of 50S ribosomal subunit biogenesis factors which assembles along the 30S-50S interface, preventing incorrect 23S rRNA structures from forming. Promotes peptidyl transferase center (PTC) maturation. This is Dual-action ribosomal maturation protein DarP from Actinobacillus succinogenes (strain ATCC 55618 / DSM 22257 / CCUG 43843 / 130Z).